The chain runs to 1086 residues: Transcription initiation factor TFIID subunit 2 (1086 aa).

Residues 1–11 (MDFSEASTSGD) are compositionally biased toward polar residues. Disordered stretches follow at residues 1 to 53 (MDFS…PPPV) and 1064 to 1086 (GYEA…NLMQ). Pro residues-rich tracts occupy residues 19-36 (PFPP…PPLA) and 44-53 (APPPLQPPPV). Basic and acidic residues predominate over residues 1067–1078 (AARRSPPRRDFG).

It belongs to the TAF2 family. In terms of assembly, component of the TFIID basal transcription factor complex, composed of TATA-box-binding protein tbp-1, and a number of TBP-associated factors (TAFs).

It localises to the nucleus. Functionally, the TFIID basal transcription factor complex plays a major role in the initiation of RNA polymerase II (Pol II)-dependent transcription. TFIID recognizes and binds promoters via its subunit tbp-1, a TATA-box-binding protein, and promotes assembly of the pre-initiation complex (PIC). The TFIID complex consists of tbp-1 and TBP-associated factors (TAFs), including taf-2. May regulate RNA polymerase II activity and thereby may control transcription initiation by RNA polymerase II. This chain is Transcription initiation factor TFIID subunit 2, found in Caenorhabditis elegans.